Here is a 119-residue protein sequence, read N- to C-terminus: Large ribosomal subunit protein bL20 (119 aa).

It belongs to the bacterial ribosomal protein bL20 family.

Functionally, binds directly to 23S ribosomal RNA and is necessary for the in vitro assembly process of the 50S ribosomal subunit. It is not involved in the protein synthesizing functions of that subunit. In Gloeobacter violaceus (strain ATCC 29082 / PCC 7421), this protein is Large ribosomal subunit protein bL20.